Consider the following 423-residue polypeptide: Ferrochelatase, mitochondrial (423 aa).

A mitochondrion-targeting transit peptide spans 1–40; it reads MIRFCPSCFALKRTAPVLNHTSRLGNYFNNTFSKFSVNRM. [2Fe-2S] cluster is bound at residue cysteine 200. Aspartate 385 is a catalytic residue. Residues cysteine 405, cysteine 408, and cysteine 413 each contribute to the [2Fe-2S] cluster site.

The protein belongs to the ferrochelatase family. Monomer. [2Fe-2S] cluster is required as a cofactor.

The protein resides in the mitochondrion inner membrane. Its subcellular location is the cytoplasm. It localises to the nucleus. The catalysed reaction is heme b + 2 H(+) = protoporphyrin IX + Fe(2+). Its pathway is porphyrin-containing compound metabolism; protoheme biosynthesis; protoheme from protoporphyrin-IX: step 1/1. Its function is as follows. Catalyzes the ferrous insertion into protoporphyrin IX. In Schizosaccharomyces pombe (strain 972 / ATCC 24843) (Fission yeast), this protein is Ferrochelatase, mitochondrial (hem15).